The chain runs to 372 residues: DSC E3 ubiquitin ligase complex subunit 2 (372 aa).

5 helical membrane passes run 26 to 46 (VVAG…LHLL), 54 to 74 (ILLW…LFII), 95 to 115 (YMFI…SLLF), 126 to 146 (TFLI…TVFV), and 160 to 180 (VIPM…NAFL). A disordered region spans residues 246–314 (TENENQVENP…LPTGPASQLY (69 aa)). Residues 249-268 (ENQVENPVSNADANDSPTRQ) show a composition bias toward polar residues. Ser264 carries the post-translational modification Phosphoserine. Thr266 carries the post-translational modification Phosphothreonine. A compositionally biased stretch (low complexity) spans 269–284 (NARATAIASSSNTAAS). Over residues 286–305 (RNRQQISHPPLGRTSSSSVL) the composition is skewed to polar residues. The UBA domain maps to 332 to 368 (EDINTVQTIMQTSRAQAIQALSQTNDVQRAVELLLEQ).

Component of the DSC E3 ubiquitin ligase complex composed of dsc1, dsc2, dsc3 and dsc4.

It is found in the golgi apparatus membrane. It carries out the reaction S-ubiquitinyl-[E2 ubiquitin-conjugating enzyme]-L-cysteine + [acceptor protein]-L-lysine = [E2 ubiquitin-conjugating enzyme]-L-cysteine + N(6)-ubiquitinyl-[acceptor protein]-L-lysine.. The protein operates within protein modification; protein ubiquitination. Its function is as follows. Component of the DSC E3 ubiquitin ligase complex which is required for the sre1 transcriptional activator proteolytic cleavage to release the soluble transcription factor from the membrane in low oxygen or sterol conditions. The complex also plays an important role in the multivesicular body (MVB) pathway and functions in a post-endoplasmic reticulum pathway for protein degradation. This chain is DSC E3 ubiquitin ligase complex subunit 2 (dsc2), found in Schizosaccharomyces pombe (strain 972 / ATCC 24843) (Fission yeast).